A 478-amino-acid chain; its full sequence is WD repeat-containing protein AAC3 (478 aa).

Disordered stretches follow at residues 33-53 (HPLF…QQQQ) and 106-140 (SQIH…QYTN). Residues 106-125 (SQIHQQSQQSQLSNNLNSNS) are compositionally biased toward low complexity. Polar residues predominate over residues 126-140 (KESTNIPKTNTQYTN). 7 WD repeats span residues 163-202 (GNKK…NSNN), 226-268 (GHDG…GTVS), 270-307 (NSEN…TLKI), 310-349 (FNGE…TTHV), 357-396 (GHTA…CVKT), 399-438 (KSTF…PIHT), and 440-478 (ECSG…GYHS).

This sequence belongs to the THOC3 family.

This chain is WD repeat-containing protein AAC3 (AAC3), found in Dictyostelium discoideum (Social amoeba).